A 28-amino-acid chain; its full sequence is Venom protein (28 aa).

Residues 1–28 (KEGYPDGQNGKKIPCAINDNISKTXEQA) are disordered. Polar residues predominate over residues 19 to 28 (DNISKTXEQA).

Expressed by the venom gland.

The protein localises to the secreted. In terms of biological role, causes symptoms of mild intoxication and transient paralysis in insects (A.domestica). The protein is Venom protein of Rhopalurus junceus (Caribbean blue scorpion).